The sequence spans 545 residues: Membrane protein insertase YidC (545 aa).

A helical transmembrane segment spans residues 6–26 (NLLLIALLFVSFMIWQAWQTD). Residues 31 to 54 (PVAQTTQQTSNPATGDAASSAVPA) are disordered. 4 consecutive transmembrane segments (helical) span residues 342–362 (KFIH…TFIV), 417–437 (LGGC…YYML), 455–475 (LSAQ…MFFI), and 496–516 (PVIF…YYIV).

It belongs to the OXA1/ALB3/YidC family. Type 1 subfamily. As to quaternary structure, interacts with the Sec translocase complex via SecD. Specifically interacts with transmembrane segments of nascent integral membrane proteins during membrane integration.

Its subcellular location is the cell inner membrane. Required for the insertion and/or proper folding and/or complex formation of integral membrane proteins into the membrane. Involved in integration of membrane proteins that insert both dependently and independently of the Sec translocase complex, as well as at least some lipoproteins. Aids folding of multispanning membrane proteins. This Serratia proteamaculans (strain 568) protein is Membrane protein insertase YidC.